The sequence spans 412 residues: Branched-chain alpha-ketoacid dehydrogenase kinase (412 aa).

The N-terminal 30 residues, 1–30 (MILASVLGSGPRGGPPLRPLLGPALSLRAR), are a transit peptide targeting the mitochondrion. Serine 31 carries the phosphoserine modification. Position 52 is a phosphoserine; by autocatalysis (serine 52). The Histidine kinase domain maps to 159 to 404 (LDDHKDVVTL…DVYLRLRHID (246 aa)). Lysine 192 and lysine 233 each carry N6-acetyllysine. ATP contacts are provided by asparagine 279 and aspartate 315. Residue asparagine 279 participates in Mg(2+) binding. K(+) contacts are provided by valine 328, aspartate 330, and phenylalanine 333. Positions 334 and 335 each coordinate ATP. A phosphoserine mark is found at serine 356 and serine 360. Positions 364, 367, and 370 each coordinate ATP. Glycine 367 contributes to the K(+) binding site.

It belongs to the PDK/BCKDK protein kinase family. As to quaternary structure, homodimer. Homotetramer. Dimerizes through interaction of two opposing nucleotide-binding domains. Interacts with E2 component of the branched-chain alpha-ketoacid dehydrogenase (BCKDH) complex. Competes with BCKDK for binding to the E2 component; this interaction is modulated by branched-chain alpha-keto acids. At steady state, BCKDH holoenzyme contains BCKDK and BCKDHA is phosphorylated. In response to high levels of branched-chain alpha-keto acids, the inhibitory BCKDK is replaced by activating PPM1K leading to BCKDHA dephosphorylation and BCAA degradation. Autophosphorylated.

It localises to the mitochondrion matrix. The protein resides in the mitochondrion. The enzyme catalyses L-seryl-[3-methyl-2-oxobutanoate dehydrogenase] + ATP = O-phospho-L-seryl-[3-methyl-2-oxobutanoate dehydrogenase] + ADP + H(+). It carries out the reaction L-seryl-[protein] + ATP = O-phospho-L-seryl-[protein] + ADP + H(+). Functionally, serine/threonine-protein kinase component of macronutrients metabolism. Forms a functional kinase and phosphatase pair with PPM1K, serving as a metabolic regulatory node that coordinates branched-chain amino acids (BCAAs) with glucose and lipid metabolism via two distinct phosphoprotein targets: mitochondrial BCKDHA subunit of the branched-chain alpha-ketoacid dehydrogenase (BCKDH) complex and cytosolic ACLY, a lipogenic enzyme of Krebs cycle. Phosphorylates and inactivates mitochondrial BCKDH complex a multisubunit complex consisting of three multimeric components each involved in different steps of BCAA catabolism: E1 composed of BCKDHA and BCKDHB, E2 core composed of DBT monomers, and E3 composed of DLD monomers. Associates with the E2 component of BCKDH complex and phosphorylates BCKDHA on Ser-347, leading to conformational changes that interrupt substrate channeling between E1 and E2 and inactivates the BCKDH complex. Phosphorylates ACLY on Ser-455 in response to changes in cellular carbohydrate abundance such as occurs during fasting to feeding metabolic transition. Refeeding stimulates MLXIPL/ChREBP transcription factor, leading to increased BCKDK to PPM1K expression ratio, phosphorylation and activation of ACLY that ultimately results in the generation of malonyl-CoA and oxaloacetate immediate substrates of de novo lipogenesis and glucogenesis, respectively. Recognizes phosphosites having SxxE/D canonical motif. In Bos taurus (Bovine), this protein is Branched-chain alpha-ketoacid dehydrogenase kinase (BCKDK).